The primary structure comprises 236 residues: Orotidine 5'-phosphate decarboxylase (236 aa).

Residues Asp-13, Lys-35, 62-71 (DLKFYDIPQT), Thr-123, Arg-184, Gln-193, Gly-213, and Arg-214 contribute to the substrate site. Catalysis depends on Lys-64, which acts as the Proton donor.

It belongs to the OMP decarboxylase family. Type 1 subfamily. Homodimer.

It catalyses the reaction orotidine 5'-phosphate + H(+) = UMP + CO2. It participates in pyrimidine metabolism; UMP biosynthesis via de novo pathway; UMP from orotate: step 2/2. Functionally, catalyzes the decarboxylation of orotidine 5'-monophosphate (OMP) to uridine 5'-monophosphate (UMP). The protein is Orotidine 5'-phosphate decarboxylase of Coxiella burnetii (strain CbuK_Q154) (Coxiella burnetii (strain Q154)).